Consider the following 521-residue polypeptide: Phosphoenolpyruvate carboxykinase (ATP) (521 aa).

Substrate-binding residues include Arg-52, Tyr-186, and Lys-192. Residues Lys-192, His-211, and 227-235 (GLSGTGKTT) each bind ATP. Residues Lys-192 and His-211 each contribute to the Mn(2+) site. Position 248 (Asp-248) interacts with Mn(2+). ATP is bound by residues Glu-276, Arg-313, 432–433 (RI), and Thr-438. Arg-313 is a substrate binding site.

The protein belongs to the phosphoenolpyruvate carboxykinase (ATP) family. Mn(2+) serves as cofactor.

It is found in the cytoplasm. The catalysed reaction is oxaloacetate + ATP = phosphoenolpyruvate + ADP + CO2. It participates in carbohydrate biosynthesis; gluconeogenesis. Its function is as follows. Involved in the gluconeogenesis. Catalyzes the conversion of oxaloacetate (OAA) to phosphoenolpyruvate (PEP) through direct phosphoryl transfer between the nucleoside triphosphate and OAA. This is Phosphoenolpyruvate carboxykinase (ATP) from Caldanaerobacter subterraneus subsp. tengcongensis (strain DSM 15242 / JCM 11007 / NBRC 100824 / MB4) (Thermoanaerobacter tengcongensis).